Consider the following 411-residue polypeptide: MLDTIESYIKSHKEKENLYVKKNVSIIGSPLAAGQPLGGVQLACDDLRKLGLHNVIDVLGWKYEDIGNIDNGDNEMKQEKKTNNYINNNDNNNDNNNDNNNDNNNNCYIPNGVIKEKKHDLSNNKMNGYVNHNFYGNYEENNVISTNDKYKNNCYYDNIRNIKEIGIFSKNLFDTMSNELRKKNFVLNIGGDHGVAFSSILSSLQMYQNLRVIWIDAHGDINIPETSPSGNYHGMTLAHTLGLFKKKVPYFEWSENLTYLKPENTAIIGIRDIDAYEKIILKKCNINYYTIFDIEKNGIYNTICTALEKIDPNSNCPIHISLDIDSVDNVFAPGTGTVAKGGLNYREINLLMKILAETKRVVSMDLVEYNPSLDEVDKKVHGDSLPILDNATKTGKLCLELIARVLGYDIV.

The interval 83–106 (NNYINNNDNNNDNNNDNNNDNNNN) is disordered. Mn(2+)-binding residues include His193, Asp216, His218, and Asp220. The L-arginine site is built by Asn222, Ser229, and Asp274. Asp323 and Asp325 together coordinate Mn(2+).

The protein belongs to the arginase family. As to quaternary structure, homotrimer; oligomerization is dependent on Mn(2+) binding. Requires Mn(2+) as cofactor.

It catalyses the reaction L-arginine + H2O = urea + L-ornithine. It participates in nitrogen metabolism; urea cycle; L-ornithine and urea from L-arginine: step 1/1. With respect to regulation, feedback inhibition by product L-ornithine,. Inhibited by 2(S)-amino-6-boronohexanoic acid (ABH); however, with less efficiency than human ARG1. In terms of biological role, catalyzes the hydrolysis of L-arginine into urea and L-ornithine, which is a precursor for polyamine biosynthesis. May play a role in parasite intra-hepatic development during the host liver stage. This is Arginase from Plasmodium falciparum (isolate 3D7).